We begin with the raw amino-acid sequence, 114 residues long: Fluoride-specific ion channel FluC 1 (114 aa).

3 helical membrane-spanning segments follow: residues 28-48, 56-76, and 91-111; these read VFPW…GFLH, ILLL…TFQV, and IIYL…GSWL. Residues glycine 66 and threonine 69 each contribute to the Na(+) site.

Belongs to the fluoride channel Fluc/FEX (TC 1.A.43) family.

The protein resides in the cell membrane. The enzyme catalyses fluoride(in) = fluoride(out). Na(+) is not transported, but it plays an essential structural role and its presence is essential for fluoride channel function. Fluoride-specific ion channel. Important for reducing fluoride concentration in the cell, thus reducing its toxicity. The chain is Fluoride-specific ion channel FluC 1 from Ligilactobacillus salivarius (strain UCC118) (Lactobacillus salivarius).